The sequence spans 306 residues: Mitochondrial glycine transporter (306 aa).

Solcar repeat units follow at residues 25 to 114, 121 to 205, and 217 to 301; these read QPVI…LKQY, PTAL…TKNV, and LVPV…MMAK. Transmembrane regions (helical) follow at residues 31 to 56, 89 to 115, 127 to 152, 180 to 203, 221 to 247, and 276 to 294; these read FLCG…TRLQ, GMSP…KQYF, VILG…TRYE, GLTA…SQTK, VNFS…KTHM, and GSVP…AWTV.

The protein belongs to the mitochondrial carrier (TC 2.A.29) family. SLC25A38 subfamily.

The protein localises to the mitochondrion inner membrane. It carries out the reaction glycine(in) = glycine(out). Functionally, mitochondrial glycine transporter that imports glycine into the mitochondrial matrix. Plays an important role in providing glycine for the first enzymatic step in heme biosynthesis, the condensation of glycine with succinyl-CoA to produce 5-aminolevulinate (ALA) in the mitochondrial matrix. Required during erythropoiesis. In terms of biological role, plays a role as pro-apoptotic protein that induces caspase-dependent apoptosis. The sequence is that of Mitochondrial glycine transporter from Ovis aries (Sheep).